A 122-amino-acid chain; its full sequence is Large ribosomal subunit protein bL12 (122 aa).

It belongs to the bacterial ribosomal protein bL12 family. In terms of assembly, homodimer. Part of the ribosomal stalk of the 50S ribosomal subunit. Forms a multimeric L10(L12)X complex, where L10 forms an elongated spine to which 2 to 4 L12 dimers bind in a sequential fashion. Binds GTP-bound translation factors.

Its function is as follows. Forms part of the ribosomal stalk which helps the ribosome interact with GTP-bound translation factors. Is thus essential for accurate translation. This Mesoplasma florum (strain ATCC 33453 / NBRC 100688 / NCTC 11704 / L1) (Acholeplasma florum) protein is Large ribosomal subunit protein bL12.